The chain runs to 358 residues: Peptide chain release factor 1 (358 aa).

Gln233 carries the post-translational modification N5-methylglutamine.

This sequence belongs to the prokaryotic/mitochondrial release factor family. Methylated by PrmC. Methylation increases the termination efficiency of RF1.

It localises to the cytoplasm. In terms of biological role, peptide chain release factor 1 directs the termination of translation in response to the peptide chain termination codons UAG and UAA. This Listeria monocytogenes serovar 1/2a (strain ATCC BAA-679 / EGD-e) protein is Peptide chain release factor 1.